Here is a 231-residue protein sequence, read N- to C-terminus: Cell cycle transcriptional regulator CtrA (231 aa).

Residues 2-116 (RVLLIEDDSA…EMIARIHAVV (115 aa)) enclose the Response regulatory domain. D51 bears the 4-aspartylphosphate mark. A DNA-binding region (ompR/PhoB-type) is located at residues 124-223 (QSVIKTGDIV…VWGRGYVLRD (100 aa)).

Post-translationally, phosphorylated by CckA.

Its function is as follows. Forms part of a two-component regulatory system CtrA/CckA that controls multiple events in the cell cycle, including cell division, stalk synthesis and cell cycle-specific transcription. Binds to a group of cell cycle-regulated promoters critical for DNA replication, DNA methylation, and class II flagellar biogenesis. The chain is Cell cycle transcriptional regulator CtrA (ctrA) from Caulobacter vibrioides (strain ATCC 19089 / CIP 103742 / CB 15) (Caulobacter crescentus).